Here is a 297-residue protein sequence, read N- to C-terminus: Leucine-rich repeat-containing protein 25 (297 aa).

The N-terminal stretch at 1-25 (MGSIRTRLLWLCLLMLLALLHKSGS) is a signal peptide. Residues 26 to 169 (QDLTCMVHPS…SCPPSWGPGT (144 aa)) are Extracellular-facing. 2 N-linked (GlcNAc...) asparagine glycosylation sites follow: asparagine 44 and asparagine 49. LRR repeat units lie at residues 66–89 (HAQV…DKLE) and 90–113 (KLQT…LRCD). 2 N-linked (GlcNAc...) asparagine glycosylation sites follow: asparagine 133 and asparagine 152. The chain crosses the membrane as a helical span at residues 170-190 (IGALVAGTISLAVAVSGSVLA). The Cytoplasmic portion of the chain corresponds to 191-297 (WRLLRRRRRA…VYCNLESLGR (107 aa)). The tract at residues 202–244 (EHSLSKAQMSPHDIPKPVTDFLPRYSSRRPGPKAPDSPPSRFT) is disordered. Phosphoserine occurs at positions 211, 238, and 267. The residue at position 289 (tyrosine 289) is a Phosphotyrosine.

As to quaternary structure, interacts with RIGI. Interacts with SQSTM1. Interacts with p65/RELA; this interaction promotes the degradation of RELA through autophagy.

The protein resides in the membrane. Its subcellular location is the cytoplasm. Its function is as follows. Plays a role in the inhibition of RLR-mediated type I interferon signaling pathway by targeting RIGI for autophagic degradation. Interacts specifically with ISG15-associated RIGI to promote interaction between RIGI and the autophagic cargo receptor p62/SQSTM1 to mediate RIGI degradation via selective autophagy. Plays also a role in the inhibition of NF-kappa-B signaling pathway and inflammatory response by promoting the degradation of p65/RELA. The sequence is that of Leucine-rich repeat-containing protein 25 (Lrrc25) from Mus musculus (Mouse).